The following is a 644-amino-acid chain: DNA gyrase subunit B (644 aa).

The 115-residue stretch at 429 to 543 folds into the Toprim domain; that stretch reads CEIFLVEGDS…AGYVYIAQPP (115 aa). Glutamate 435, aspartate 508, and aspartate 510 together coordinate Mg(2+).

Belongs to the type II topoisomerase GyrB family. As to quaternary structure, heterotetramer, composed of two GyrA and two GyrB chains. In the heterotetramer, GyrA contains the active site tyrosine that forms a transient covalent intermediate with DNA, while GyrB binds cofactors and catalyzes ATP hydrolysis. Requires Mg(2+) as cofactor. It depends on Mn(2+) as a cofactor. Ca(2+) is required as a cofactor.

Its subcellular location is the cytoplasm. It catalyses the reaction ATP-dependent breakage, passage and rejoining of double-stranded DNA.. In terms of biological role, a type II topoisomerase that negatively supercoils closed circular double-stranded (ds) DNA in an ATP-dependent manner to modulate DNA topology and maintain chromosomes in an underwound state. Negative supercoiling favors strand separation, and DNA replication, transcription, recombination and repair, all of which involve strand separation. Also able to catalyze the interconversion of other topological isomers of dsDNA rings, including catenanes and knotted rings. Type II topoisomerases break and join 2 DNA strands simultaneously in an ATP-dependent manner. This Staphylococcus aureus (strain MRSA252) protein is DNA gyrase subunit B.